Consider the following 56-residue polypeptide: Small ribosomal subunit protein uS14 (56 aa).

4 residues coordinate Zn(2+): cysteine 21, cysteine 24, cysteine 39, and cysteine 42.

This sequence belongs to the universal ribosomal protein uS14 family. Component of the 40S small ribosomal subunit. Zn(2+) is required as a cofactor.

Its subcellular location is the cytoplasm. The protein localises to the cytosol. The protein resides in the rough endoplasmic reticulum. The chain is Small ribosomal subunit protein uS14 (RpS29) from Lysiphlebus testaceipes (Greenbugs aphid parastoid).